The following is an 86-amino-acid chain: UPF0297 protein SAHV_1604 (86 aa).

Belongs to the UPF0297 family.

This is UPF0297 protein SAHV_1604 from Staphylococcus aureus (strain Mu3 / ATCC 700698).